The sequence spans 273 residues: ATP synthase subunit a (273 aa).

5 consecutive transmembrane segments (helical) span residues 42-62 (TLNIDSLFFSVVLGALFLFIF), 102-122 (VIAPLALTVFVWVFLMNMMDL), 148-168 (DVSITLSMALGVFILILFYSI), 213-233 (LFGNMYAGELIFILIAGLLPW), and 244-264 (AIFHILIITLQAFIFMVLTIV).

Belongs to the ATPase A chain family. F-type ATPases have 2 components, CF(1) - the catalytic core - and CF(0) - the membrane proton channel. CF(1) has five subunits: alpha(3), beta(3), gamma(1), delta(1), epsilon(1). CF(0) has three main subunits: a(1), b(2) and c(9-12). The alpha and beta chains form an alternating ring which encloses part of the gamma chain. CF(1) is attached to CF(0) by a central stalk formed by the gamma and epsilon chains, while a peripheral stalk is formed by the delta and b chains.

The protein resides in the cell inner membrane. Key component of the proton channel; it plays a direct role in the translocation of protons across the membrane. The protein is ATP synthase subunit a of Serratia proteamaculans (strain 568).